A 617-amino-acid polypeptide reads, in one-letter code: Phenylalanine--tRNA ligase beta subunit (617 aa).

A B5 domain is found at 306 to 383 (IQEKQINAQV…IGYGYDNLKK (78 aa)). Mg(2+)-binding residues include Asp-361, Asp-367, Glu-370, and Asp-371.

This sequence belongs to the phenylalanyl-tRNA synthetase beta subunit family. Type 2 subfamily. As to quaternary structure, tetramer of two alpha and two beta subunits. The cofactor is Mg(2+).

The protein resides in the cytoplasm. The enzyme catalyses tRNA(Phe) + L-phenylalanine + ATP = L-phenylalanyl-tRNA(Phe) + AMP + diphosphate + H(+). This is Phenylalanine--tRNA ligase beta subunit (phesB) from Dictyostelium discoideum (Social amoeba).